Here is a 38-residue protein sequence, read N- to C-terminus: Zinc-containing ferredoxin (38 aa).

Positions Gly-1–Pro-11 are enriched in polar residues. The disordered stretch occupies residues Gly-1 to Gly-38. Residues Gly-1–Gly-38 form an N-terminal extension region. Positions 16 and 19 each coordinate Zn(2+). The segment covering Pro-28 to Gly-38 has biased composition (basic and acidic residues). Lys-30 carries the post-translational modification N6-methyllysine. Zn(2+) is bound at residue His-37.

[3Fe-4S] cluster serves as cofactor. It depends on [4Fe-4S] cluster as a cofactor. Zn(2+) is required as a cofactor.

Functionally, ferredoxins are iron-sulfur proteins that transfer electrons in a wide variety of metabolic reactions. The chain is Zinc-containing ferredoxin (zfx) from Metallosphaera prunae.